We begin with the raw amino-acid sequence, 66 residues long: SPbeta prophage-derived uncharacterized protein YopM (66 aa).

This Bacillus subtilis (strain 168) protein is SPbeta prophage-derived uncharacterized protein YopM (yopM).